Here is a 385-residue protein sequence, read N- to C-terminus: Transcription termination factor 2, mitochondrial (385 aa).

The N-terminal 35 residues, 1–35 (MSWRLLTGYQLCRLRLFRKPQPALKIRPSSVCVTY), are a transit peptide targeting the mitochondrion.

Belongs to the mTERF family. As to quaternary structure, monomer.

The protein localises to the mitochondrion matrix. It localises to the mitochondrion nucleoid. Its function is as follows. Binds mitochondrial DNA and plays a role in the regulation of transcription of mitochondrial mRNA and rRNA species. The sequence is that of Transcription termination factor 2, mitochondrial (Mterf2) from Rattus norvegicus (Rat).